A 116-amino-acid polypeptide reads, in one-letter code: DNA-binding protein Tpen_0471 (116 aa).

It belongs to the PDCD5 family.

The protein is DNA-binding protein Tpen_0471 of Thermofilum pendens (strain DSM 2475 / Hrk 5).